The chain runs to 210 residues: dITP/XTP pyrophosphatase (210 aa).

16 to 21 (SNNKGK) serves as a coordination point for substrate. The active-site Proton acceptor is Asp79. Residue Asp79 participates in Mg(2+) binding. Substrate-binding positions include Ser80, 166–169 (FGYD), Lys189, and 194–195 (HR).

It belongs to the HAM1 NTPase family. Homodimer. Requires Mg(2+) as cofactor.

The catalysed reaction is XTP + H2O = XMP + diphosphate + H(+). The enzyme catalyses dITP + H2O = dIMP + diphosphate + H(+). It carries out the reaction ITP + H2O = IMP + diphosphate + H(+). Its function is as follows. Pyrophosphatase that catalyzes the hydrolysis of nucleoside triphosphates to their monophosphate derivatives, with a high preference for the non-canonical purine nucleotides XTP (xanthosine triphosphate), dITP (deoxyinosine triphosphate) and ITP. Seems to function as a house-cleaning enzyme that removes non-canonical purine nucleotides from the nucleotide pool, thus preventing their incorporation into DNA/RNA and avoiding chromosomal lesions. This is dITP/XTP pyrophosphatase from Acinetobacter baylyi (strain ATCC 33305 / BD413 / ADP1).